We begin with the raw amino-acid sequence, 170 residues long: RNA pyrophosphohydrolase (170 aa).

The region spanning 8 to 158 (PYRTCVGMML…KRPVYERVVK (151 aa)) is the Nudix hydrolase domain. The Nudix box signature appears at 46 to 67 (GGVDPGEDTWLAAKRELYEETS).

Belongs to the Nudix hydrolase family. RppH subfamily. It depends on a divalent metal cation as a cofactor.

Accelerates the degradation of transcripts by removing pyrophosphate from the 5'-end of triphosphorylated RNA, leading to a more labile monophosphorylated state that can stimulate subsequent ribonuclease cleavage. This chain is RNA pyrophosphohydrolase, found in Nitrobacter winogradskyi (strain ATCC 25391 / DSM 10237 / CIP 104748 / NCIMB 11846 / Nb-255).